A 394-amino-acid polypeptide reads, in one-letter code: Glycerol-3-phosphate dehydrogenase [NAD(+)] 2 (394 aa).

NAD(+)-binding positions include 41–46 (GSGNWG), lysine 152, and alanine 185. A substrate-binding site is contributed by lysine 152. The Proton acceptor role is filled by lysine 243. Arginine 308 and glutamine 337 together coordinate NAD(+). 308 to 309 (RN) is a binding site for substrate.

This sequence belongs to the NAD-dependent glycerol-3-phosphate dehydrogenase family.

It catalyses the reaction sn-glycerol 3-phosphate + NAD(+) = dihydroxyacetone phosphate + NADH + H(+). This Cyberlindnera jadinii (Torula yeast) protein is Glycerol-3-phosphate dehydrogenase [NAD(+)] 2 (gpd2).